The primary structure comprises 348 residues: Heat-inducible transcription repressor HrcA (348 aa).

The protein belongs to the HrcA family.

In terms of biological role, negative regulator of class I heat shock genes (grpE-dnaK-dnaJ and groELS operons). Prevents heat-shock induction of these operons. The sequence is that of Heat-inducible transcription repressor HrcA from Thermomicrobium roseum (strain ATCC 27502 / DSM 5159 / P-2).